We begin with the raw amino-acid sequence, 90 residues long: Secretoglobin family 1D member 1 (90 aa).

The signal sequence occupies residues 1–21; the sequence is MRLSVCLLLLTLALCCYRANA.

Heterodimer of a lipophilin A and a lipophilin C (mammaglobin B) monomer associated head to head. Expressed in lachrymal gland, thymus, kidney, testis, ovary and salivary gland.

Its subcellular location is the secreted. May bind androgens and other steroids, may also bind estramustine, a chemotherapeutic agent used for prostate cancer. May be under transcriptional regulation of steroid hormones. The polypeptide is Secretoglobin family 1D member 1 (SCGB1D1) (Homo sapiens (Human)).